Here is a 73-residue protein sequence, read N- to C-terminus: Translation initiation factor IF-1 (73 aa).

The 72-residue stretch at 1–72 folds into the S1-like domain; that stretch reads MAKEDVIEVE…SRGRITYRYR (72 aa).

Belongs to the IF-1 family. Component of the 30S ribosomal translation pre-initiation complex which assembles on the 30S ribosome in the order IF-2 and IF-3, IF-1 and N-formylmethionyl-tRNA(fMet); mRNA recruitment can occur at any time during PIC assembly.

The protein resides in the cytoplasm. In terms of biological role, one of the essential components for the initiation of protein synthesis. Stabilizes the binding of IF-2 and IF-3 on the 30S subunit to which N-formylmethionyl-tRNA(fMet) subsequently binds. Helps modulate mRNA selection, yielding the 30S pre-initiation complex (PIC). Upon addition of the 50S ribosomal subunit IF-1, IF-2 and IF-3 are released leaving the mature 70S translation initiation complex. The sequence is that of Translation initiation factor IF-1 from Rubrobacter xylanophilus (strain DSM 9941 / JCM 11954 / NBRC 16129 / PRD-1).